We begin with the raw amino-acid sequence, 589 residues long: Actin-histidine N-methyltransferase (589 aa).

A disordered region spans residues 1–22 (MGKKSRVKTQKSGTGATATVSP). A compositionally biased stretch (polar residues) spans 10-20 (QKSGTGATATV). Residues arginine 75, 104 to 106 (EGF), arginine 254, 275 to 279 (DMCNH), and 325 to 327 (SGF) contribute to the S-adenosyl-L-methionine site. Residues 94-314 (EGFEMVNFKE…AGEQIYIFYG (221 aa)) form the SET domain. Phosphoserine is present on serine 513. The segment at 547–589 (LVNGERSFPNGTRSEEDLKQEERKRAKGDAKESSSDSTDAVKE) is disordered. Residues 559–589 (RSEEDLKQEERKRAKGDAKESSSDSTDAVKE) are compositionally biased toward basic and acidic residues.

It belongs to the class V-like SAM-binding methyltransferase superfamily. SETD3 actin-histidine methyltransferase family. As to quaternary structure, interacts with MYOD1. Post-translationally, phosphorylated by GSK3B, which is required for recognition by the SCF(FBXW7) complex and subsequent degradation. Ubiquitinated by the SCF(FBXW7) complex following phosphorylation by GSK3B, leading to its degradation by the proteasome.

Its subcellular location is the cytoplasm. It is found in the nucleus. The enzyme catalyses L-histidyl-[protein] + S-adenosyl-L-methionine = N(tele)-methyl-L-histidyl-[protein] + S-adenosyl-L-homocysteine + H(+). Protein-histidine N-methyltransferase that specifically mediates 3-methylhistidine (tele-methylhistidine) methylation of actin at 'His-73'. Histidine methylation of actin is required for smooth muscle contraction of the laboring uterus during delivery. Does not have protein-lysine N-methyltransferase activity and probably only catalyzes histidine methylation of actin. The chain is Actin-histidine N-methyltransferase from Dasypus novemcinctus (Nine-banded armadillo).